Here is an 892-residue protein sequence, read N- to C-terminus: Alpha-actinin-1 (892 aa).

An N-acetylmethionine modification is found at M1. The interval 1–247 (MDHYDSQQTN…IMTYVSSFYH (247 aa)) is actin-binding. A Phosphoserine modification is found at S6. Y12 is modified (phosphotyrosine; by FAK1). Calponin-homology (CH) domains lie at 31-135 (KQQR…LRFA) and 144-250 (TSAK…HAFS). K95 and K195 each carry N6-acetyllysine. Spectrin repeat units lie at residues 274 to 384 (QLME…WLLN), 394 to 499 (HLAE…ALER), 509 to 620 (QLYL…ALTE), and 630 to 733 (RLRK…EVEN). The segment at 274-733 (QLMEDYEKLA…IARTINEVEN (460 aa)) is interaction with DDN. S471 is modified (phosphoserine). K676 bears the N6-acetyllysine mark. S677 is subject to Phosphoserine. 2 consecutive EF-hand domains span residues 746 to 781 (EQMN…LGYD) and 787 to 822 (QGEA…ETAD). D759, D761, S763, T765, and E770 together coordinate Ca(2+). The residue at position 890 (S890) is a Phosphoserine.

The protein belongs to the alpha-actinin family. Homodimer; antiparallel. Interacts with MYOZ2, TTID and LPP. Interacts with DDN. Interacts with PSD. Interacts with MICALL2. Interacts with DNM2 and CTTN. Interacts with PDLIM1. Interacts with PDLIM2. Interacts with PDLIM4 (via PDZ domain). Interacts with IGSF8.

The protein resides in the cytoplasm. Its subcellular location is the cytoskeleton. The protein localises to the myofibril. It localises to the sarcomere. It is found in the z line. The protein resides in the cell membrane. Its subcellular location is the cell junction. The protein localises to the cell projection. It localises to the ruffle. F-actin cross-linking protein which is thought to anchor actin to a variety of intracellular structures. Association with IGSF8 regulates the immune synapse formation and is required for efficient T-cell activation. The chain is Alpha-actinin-1 (Actn1) from Rattus norvegicus (Rat).